The primary structure comprises 396 residues: MTEHSIRNFSINFGPQHPAAHGVLRLVLELDGEIVERVDPHIGLLHRGTEKLIEVKTYLQATPYFDRLDYVAPMNQEHAFCLAVEKLLGIEVPRRAKLIRTLFCEIGRLLSHLLNVTTQAMDVGALTPPLWGFEEREKLMIFYERASGARLHANYFRPGGVHQDLPPGLIDDIEAFCDPFLQVVDDLDALVIGNRIFKQRNVDIGIVTVDAAMAWGFSGVMLRGSGIPWDLRRAQPYEAYEEMEFDVPVGKNGDTYDRQVIRMEEMRQSVRIMKQCLAKLRAPDGQGPVTTQDGKVAPPSRREMKRSMEALIHHFKLYTEGFHVPAGEVYAAVEAPKGEFGVYLVADGTNKPYRCKIRAPGFAHLQAMDWMCRGHMLADVSCILGTLDIVFGEVDR.

Belongs to the complex I 49 kDa subunit family. In terms of assembly, NDH-1 is composed of 14 different subunits. Subunits NuoB, C, D, E, F, and G constitute the peripheral sector of the complex.

It localises to the cell inner membrane. It carries out the reaction a quinone + NADH + 5 H(+)(in) = a quinol + NAD(+) + 4 H(+)(out). Functionally, NDH-1 shuttles electrons from NADH, via FMN and iron-sulfur (Fe-S) centers, to quinones in the respiratory chain. The immediate electron acceptor for the enzyme in this species is believed to be ubiquinone. Couples the redox reaction to proton translocation (for every two electrons transferred, four hydrogen ions are translocated across the cytoplasmic membrane), and thus conserves the redox energy in a proton gradient. The sequence is that of NADH-quinone oxidoreductase subunit D from Methylobacterium sp. (strain 4-46).